The primary structure comprises 272 residues: Formamidopyrimidine-DNA glycosylase (272 aa).

The active-site Schiff-base intermediate with DNA is Pro2. Residue Glu3 is the Proton donor of the active site. Lys58 (proton donor; for beta-elimination activity) is an active-site residue. His94, Arg112, and Arg153 together coordinate DNA. The FPG-type zinc finger occupies 238 to 272; sequence FVYDRAGEPCRVCGAPIRQIVQGQRSTYFCPNCQR. Arg262 acts as the Proton donor; for delta-elimination activity in catalysis.

The protein belongs to the FPG family. As to quaternary structure, monomer. The cofactor is Zn(2+).

It carries out the reaction Hydrolysis of DNA containing ring-opened 7-methylguanine residues, releasing 2,6-diamino-4-hydroxy-5-(N-methyl)formamidopyrimidine.. The catalysed reaction is 2'-deoxyribonucleotide-(2'-deoxyribose 5'-phosphate)-2'-deoxyribonucleotide-DNA = a 3'-end 2'-deoxyribonucleotide-(2,3-dehydro-2,3-deoxyribose 5'-phosphate)-DNA + a 5'-end 5'-phospho-2'-deoxyribonucleoside-DNA + H(+). Its function is as follows. Involved in base excision repair of DNA damaged by oxidation or by mutagenic agents. Acts as a DNA glycosylase that recognizes and removes damaged bases. Has a preference for oxidized purines, such as 7,8-dihydro-8-oxoguanine (8-oxoG). Has AP (apurinic/apyrimidinic) lyase activity and introduces nicks in the DNA strand. Cleaves the DNA backbone by beta-delta elimination to generate a single-strand break at the site of the removed base with both 3'- and 5'-phosphates. This chain is Formamidopyrimidine-DNA glycosylase, found in Burkholderia mallei (strain NCTC 10229).